The sequence spans 445 residues: Trigger factor (445 aa).

In terms of domain architecture, PPIase FKBP-type spans 172–257 (GDQVVINFVG…VKSVNWAHLP (86 aa)).

The protein belongs to the FKBP-type PPIase family. Tig subfamily.

It localises to the cytoplasm. The enzyme catalyses [protein]-peptidylproline (omega=180) = [protein]-peptidylproline (omega=0). Involved in protein export. Acts as a chaperone by maintaining the newly synthesized protein in an open conformation. Functions as a peptidyl-prolyl cis-trans isomerase. The protein is Trigger factor of Polynucleobacter necessarius subsp. necessarius (strain STIR1).